We begin with the raw amino-acid sequence, 178 residues long: MEQFHGTTIVSVRRGDKVALGGDGQVTLGNIVMKGGARKVRRIYNNQVLVGFAGGTADAFSLLDRFEAKLEKHQGNLTRAAVELAKDWRTDRMLRRLEAMLITADATTTLVITGNGDVLDPEGGICAIGSGGAYAQAAARALAENTELSPREIVEKSLEIAGDMCIYTNHNRIIETIE.

T7 is an active-site residue. The Na(+) site is built by G162, C165, and T168.

It belongs to the peptidase T1B family. HslV subfamily. A double ring-shaped homohexamer of HslV is capped on each side by a ring-shaped HslU homohexamer. The assembly of the HslU/HslV complex is dependent on binding of ATP.

The protein resides in the cytoplasm. It catalyses the reaction ATP-dependent cleavage of peptide bonds with broad specificity.. Allosterically activated by HslU binding. Protease subunit of a proteasome-like degradation complex believed to be a general protein degrading machinery. In Burkholderia ambifaria (strain MC40-6), this protein is ATP-dependent protease subunit HslV.